Consider the following 130-residue polypeptide: MSMQDPIADMLTRIRNGQSANKVAVTMPSSKLKVAIANVLKEEGFIEDFKVEGDAKPVLELALKYFQGKAVVESIQRISRPGLRIYKKKDELPKVMAGLGIAVISTSKGVMTDRAARQAGLGGEIICYVA.

It belongs to the universal ribosomal protein uS8 family. Part of the 30S ribosomal subunit. Contacts proteins S5 and S12.

One of the primary rRNA binding proteins, it binds directly to 16S rRNA central domain where it helps coordinate assembly of the platform of the 30S subunit. The chain is Small ribosomal subunit protein uS8 from Yersinia enterocolitica serotype O:8 / biotype 1B (strain NCTC 13174 / 8081).